A 424-amino-acid chain; its full sequence is Elongation factor 1-alpha (424 aa).

Residues 5-223 form the tr-type G domain; that stretch reads KPHLNLAFIG…NALKEPQKPV (219 aa). Positions 14–21 are G1; the sequence is GHVDHGKS. 14-21 contributes to the GTP binding site; sequence GHVDHGKS. Residue Ser21 coordinates Mg(2+). The G2 stretch occupies residues 70 to 74; the sequence is GVTID. Residues 91–94 are G3; the sequence is DCPG. GTP is bound by residues 91-95 and 146-149; these read DCPGH and NKMD. A G4 region spans residues 146–149; that stretch reads NKMD. A G5 region spans residues 187–189; that stretch reads SAY.

This sequence belongs to the TRAFAC class translation factor GTPase superfamily. Classic translation factor GTPase family. EF-Tu/EF-1A subfamily.

It localises to the cytoplasm. It carries out the reaction GTP + H2O = GDP + phosphate + H(+). Its function is as follows. GTP hydrolase that promotes the GTP-dependent binding of aminoacyl-tRNA to the A-site of ribosomes during protein biosynthesis. In Methanothrix thermoacetophila (strain DSM 6194 / JCM 14653 / NBRC 101360 / PT) (Methanosaeta thermophila), this protein is Elongation factor 1-alpha.